An 845-amino-acid polypeptide reads, in one-letter code: Ribonucleoside-diphosphate reductase subunit alpha (845 aa).

One can recognise an ATP-cone domain in the interval 1–98; sequence MHIIKRNGEP…LYRDDRTKKR (98 aa). Substrate contacts are provided by residues Thr303, 318–319, Gly347, 534–538, and 725–729; these read SC, NLCTE, and PTSST. A disulfide bond links Cys319 and Cys574. Asn534 (proton acceptor) is an active-site residue. The active-site Cysteine radical intermediate is Cys536. The active-site Proton acceptor is Glu538.

Belongs to the ribonucleoside diphosphate reductase large chain family. As to quaternary structure, tetramer of two alpha and two beta subunits.

The catalysed reaction is a 2'-deoxyribonucleoside 5'-diphosphate + [thioredoxin]-disulfide + H2O = a ribonucleoside 5'-diphosphate + [thioredoxin]-dithiol. Its activity is regulated as follows. Under complex allosteric control mediated by deoxynucleoside triphosphates and ATP binding. The type of nucleotide bound at the specificity site determines substrate preference. It seems probable that ATP makes the enzyme reduce CDP and UDP, dGTP favors ADP reduction and dTTP favors GDP reduction. Its function is as follows. Provides the precursors necessary for DNA synthesis. Catalyzes the biosynthesis of deoxyribonucleotides from the corresponding ribonucleotides. This Treponema pallidum (strain Nichols) protein is Ribonucleoside-diphosphate reductase subunit alpha (nrdA).